Here is a 621-residue protein sequence, read N- to C-terminus: 1-deoxy-D-xylulose-5-phosphate synthase (621 aa).

Thiamine diphosphate is bound by residues H80 and 121–123 (GHS). D152 contacts Mg(2+). Thiamine diphosphate-binding positions include 153 to 154 (GA), N181, Y288, and E370. N181 serves as a coordination point for Mg(2+).

This sequence belongs to the transketolase family. DXPS subfamily. As to quaternary structure, homodimer. Requires Mg(2+) as cofactor. Thiamine diphosphate serves as cofactor.

It catalyses the reaction D-glyceraldehyde 3-phosphate + pyruvate + H(+) = 1-deoxy-D-xylulose 5-phosphate + CO2. Its pathway is metabolic intermediate biosynthesis; 1-deoxy-D-xylulose 5-phosphate biosynthesis; 1-deoxy-D-xylulose 5-phosphate from D-glyceraldehyde 3-phosphate and pyruvate: step 1/1. In terms of biological role, catalyzes the acyloin condensation reaction between C atoms 2 and 3 of pyruvate and glyceraldehyde 3-phosphate to yield 1-deoxy-D-xylulose-5-phosphate (DXP). This Vibrio campbellii (strain ATCC BAA-1116) protein is 1-deoxy-D-xylulose-5-phosphate synthase.